A 206-amino-acid polypeptide reads, in one-letter code: MAFTLPELPYAPNALEPFFDEATMRLHHGKHHQTYVNNLNAAIEKHNELDDLSLEELLTDLSAIPEDIRTAVRNNGGGHLNHSQFWLWLRPNTDGSENHADGEIGDAIAKEFGSFETFKTEFKAAATGRFGSGWAWLVVDEAGKLKVVSTANQDNPISEGLTPVLGLDVWEHAYYLKYHNVRPDYIEAFFNLVNWDKVNELYAKAK.

Mn(2+) contacts are provided by His-27, His-82, Asp-168, and His-172.

The protein belongs to the iron/manganese superoxide dismutase family. The cofactor is Mn(2+).

The catalysed reaction is 2 superoxide + 2 H(+) = H2O2 + O2. Destroys superoxide anion radicals which are normally produced within the cells and which are toxic to biological systems. This is Superoxide dismutase [Mn] (sodA) from Lactococcus lactis subsp. lactis (strain IL1403) (Streptococcus lactis).